The following is a 210-amino-acid chain: Orotate phosphoribosyltransferase (210 aa).

Residues arginine 96, lysine 100, histidine 102, and 122-130 (EDLISTGGS) contribute to the 5-phospho-alpha-D-ribose 1-diphosphate site. Serine 126 contacts orotate.

It belongs to the purine/pyrimidine phosphoribosyltransferase family. PyrE subfamily. In terms of assembly, homodimer. It depends on Mg(2+) as a cofactor.

The catalysed reaction is orotidine 5'-phosphate + diphosphate = orotate + 5-phospho-alpha-D-ribose 1-diphosphate. It participates in pyrimidine metabolism; UMP biosynthesis via de novo pathway; UMP from orotate: step 1/2. Its function is as follows. Catalyzes the transfer of a ribosyl phosphate group from 5-phosphoribose 1-diphosphate to orotate, leading to the formation of orotidine monophosphate (OMP). This chain is Orotate phosphoribosyltransferase, found in Streptococcus pneumoniae (strain ATCC BAA-255 / R6).